We begin with the raw amino-acid sequence, 344 residues long: Adenine deaminase (344 aa).

The Zn(2+) site is built by His24, His26, and His204. Catalysis depends on Glu207, which acts as the Proton donor. A Zn(2+)-binding site is contributed by Asp285. Residue Asp286 coordinates substrate.

The protein belongs to the metallo-dependent hydrolases superfamily. Adenosine and AMP deaminases family. Adenine deaminase type 2 subfamily. Zn(2+) serves as cofactor.

It catalyses the reaction adenine + H2O + H(+) = hypoxanthine + NH4(+). Its function is as follows. Catalyzes the hydrolytic deamination of adenine to hypoxanthine. Plays an important role in the purine salvage pathway and in nitrogen catabolism. The chain is Adenine deaminase from Caulobacter vibrioides (strain ATCC 19089 / CIP 103742 / CB 15) (Caulobacter crescentus).